We begin with the raw amino-acid sequence, 332 residues long: Putative integrase/recombinase y4rC (332 aa).

The Core-binding (CB) domain occupies 5–98 (ASLAPLLESF…AIHSFFRYAA (94 aa)). The 186-residue stretch at 122 to 307 (TLVNFLTRPE…TLAMKEAALA (186 aa)) folds into the Tyr recombinase domain. Residues Arg162, Lys187, His259, Arg262, and His285 contribute to the active site. Tyr294 acts as the O-(3'-phospho-DNA)-tyrosine intermediate in catalysis.

Belongs to the 'phage' integrase family.

This chain is Putative integrase/recombinase y4rC, found in Sinorhizobium fredii (strain NBRC 101917 / NGR234).